A 331-amino-acid polypeptide reads, in one-letter code: tRNA (guanine-N(1)-)-methyltransferase (331 aa).

2 stretches are compositionally biased toward low complexity: residues 77–99 (GSDTTARSGSTAATSASAQQATR) and 107–134 (AQPGDAGQGTAAPDYARTGGTPGAGRAA). The disordered stretch occupies residues 77–137 (GSDTTARSGS…PGAGRAASSR (61 aa)). S-adenosyl-L-methionine contacts are provided by residues G169 and 193–198 (LGDYVL). The interval 312 to 331 (WQRCSPAPSEQAPEGARDMA) is disordered.

It belongs to the RNA methyltransferase TrmD family. As to quaternary structure, homodimer.

It localises to the cytoplasm. The enzyme catalyses guanosine(37) in tRNA + S-adenosyl-L-methionine = N(1)-methylguanosine(37) in tRNA + S-adenosyl-L-homocysteine + H(+). In terms of biological role, specifically methylates guanosine-37 in various tRNAs. In Kocuria rhizophila (strain ATCC 9341 / DSM 348 / NBRC 103217 / DC2201), this protein is tRNA (guanine-N(1)-)-methyltransferase.